Reading from the N-terminus, the 347-residue chain is D-alanine--D-alanine ligase (347 aa).

Residues 134–332 (KLYAKDLGVK…LAQSLPKTPK (199 aa)) enclose the ATP-grasp domain. 161–216 (LIKFNFPFIVKPSNAGSSLGVNVVKEEKELVYALDSAFEYSKEVLIEPFIQGVKEY) lines the ATP pocket. Mg(2+) is bound by residues Asp288, Glu300, and Asn302.

It belongs to the D-alanine--D-alanine ligase family. The cofactor is Mg(2+). Requires Mn(2+) as cofactor.

Its subcellular location is the cytoplasm. It carries out the reaction 2 D-alanine + ATP = D-alanyl-D-alanine + ADP + phosphate + H(+). It functions in the pathway cell wall biogenesis; peptidoglycan biosynthesis. In terms of biological role, cell wall formation. This chain is D-alanine--D-alanine ligase, found in Helicobacter pylori (strain P12).